Consider the following 264-residue polypeptide: Indole-3-glycerol phosphate synthase (264 aa).

This sequence belongs to the TrpC family.

The enzyme catalyses 1-(2-carboxyphenylamino)-1-deoxy-D-ribulose 5-phosphate + H(+) = (1S,2R)-1-C-(indol-3-yl)glycerol 3-phosphate + CO2 + H2O. Its pathway is amino-acid biosynthesis; L-tryptophan biosynthesis; L-tryptophan from chorismate: step 4/5. The sequence is that of Indole-3-glycerol phosphate synthase from Polaromonas sp. (strain JS666 / ATCC BAA-500).